The chain runs to 43 residues: Potassium channel toxin gamma-KTx 4.9 (43 aa).

4 disulfides stabilise this stretch: Cys5-Cys23, Cys11-Cys34, Cys20-Cys39, and Cys24-Cys41.

This sequence belongs to the ergtoxin family. Gamma-KTx 4 subfamily. Expressed by the venom gland.

The protein resides in the secreted. Functionally, reversibly blocks Kv11/ERG potassium channels. The sequence is that of Potassium channel toxin gamma-KTx 4.9 from Centruroides sculpturatus (Arizona bark scorpion).